A 547-amino-acid polypeptide reads, in one-letter code: MTGTKNKTRAQAKTEKKPVTQAKAGAEREATGVVRPVAKTRAKAKAKTGSKTDAVAEMKAVSKNKVVAEVKEGALSEPKTLGRAMGDFSSKAGNESTSSTCENEAGIDAWFWAGEEATINSWFWNGEEAGNSSSTKNDKPEIGAQVCAEELEPAAGADCKPRSGAEEEEEENVIGNWFWEGDDTSFDPNPKPVSRIVKPQPLYEINEKNRPKDWSEVTIWPNAPAVTPAVLGFRSQAPSEASPPSYIVLASAEENACSLPGATACRPSRNTRSCSQPIPECRFDSDPCIQTIDEIRRQIRIREVNGIKPFACPCKMECYMDSEEFEKLVNLLKSTTDPLIHKIARIAMGVHNVHPFAQEFINEVGVVTLIESLLSFPSPEMRKKTVITLNPPSGDERQRKIELHVKHMCKETVSFPLNSPGQQSGLKILGQLTTDFVHHYIVANYFSELFHLLSSGNCKTRNLVLKLLLNMSENPTAARDMINMKALAALKLIFNQKEAKANLVSGVAIFINIKEHIRKGSIVVVDHLSYNTLMAIFREVKGIIETM.

2 stretches are compositionally biased toward basic residues: residues 1–10 and 38–48; these read MTGTKNKTRA and AKTRAKAKAKT. The interval 1–53 is disordered; it reads MTGTKNKTRAQAKTEKKPVTQAKAGAEREATGVVRPVAKTRAKAKAKTGSKTD.

This sequence belongs to the GPRASP family. In terms of assembly, homodimer.

The protein localises to the cytoplasm. Its subcellular location is the nucleus. In terms of biological role, survival and differentiation promoting protein that plays a role in the regulation of neurosynaptogenesis. Induces phosphatase PP2A activity which results in APP dephosphorylation and inhibits BACE1-mediated processing of APP. The sequence is that of G protein-coupled receptor associated sorting protein 3 (GPRASP3) from Macaca fascicularis (Crab-eating macaque).